The sequence spans 469 residues: tRNA modification GTPase MnmE (469 aa).

3 residues coordinate (6S)-5-formyl-5,6,7,8-tetrahydrofolate: Arg38, Glu95, and Arg134. Positions 230-392 constitute a TrmE-type G domain; the sequence is GIRVALVGPP…LRRGLAALVD (163 aa). GTP contacts are provided by residues 240-245, 259-265, and 284-287; these read NAGKSS, SAQAGTT, and DTAG. Mg(2+)-binding residues include Ser244 and Thr265. A (6S)-5-formyl-5,6,7,8-tetrahydrofolate-binding site is contributed by Lys468.

The protein belongs to the TRAFAC class TrmE-Era-EngA-EngB-Septin-like GTPase superfamily. TrmE GTPase family. As to quaternary structure, homodimer. Heterotetramer of two MnmE and two MnmG subunits. K(+) is required as a cofactor.

It localises to the cytoplasm. In terms of biological role, exhibits a very high intrinsic GTPase hydrolysis rate. Involved in the addition of a carboxymethylaminomethyl (cmnm) group at the wobble position (U34) of certain tRNAs, forming tRNA-cmnm(5)s(2)U34. The protein is tRNA modification GTPase MnmE of Halorhodospira halophila (strain DSM 244 / SL1) (Ectothiorhodospira halophila (strain DSM 244 / SL1)).